The sequence spans 419 residues: Gamma-glutamyl phosphate reductase (419 aa).

The protein belongs to the gamma-glutamyl phosphate reductase family.

The protein resides in the cytoplasm. It carries out the reaction L-glutamate 5-semialdehyde + phosphate + NADP(+) = L-glutamyl 5-phosphate + NADPH + H(+). It functions in the pathway amino-acid biosynthesis; L-proline biosynthesis; L-glutamate 5-semialdehyde from L-glutamate: step 2/2. Functionally, catalyzes the NADPH-dependent reduction of L-glutamate 5-phosphate into L-glutamate 5-semialdehyde and phosphate. The product spontaneously undergoes cyclization to form 1-pyrroline-5-carboxylate. This chain is Gamma-glutamyl phosphate reductase, found in Nitratidesulfovibrio vulgaris (strain ATCC 29579 / DSM 644 / CCUG 34227 / NCIMB 8303 / VKM B-1760 / Hildenborough) (Desulfovibrio vulgaris).